A 322-amino-acid polypeptide reads, in one-letter code: Secreted RxLR effector protein RXLR-C17 (322 aa).

Residues 1-25 form the signal peptide; it reads MREPAFSFRLHLFAAMILLVDVFSA. The short motif at 43–62 is the RxLR-dEER element; the sequence is RQLRARDSQAKNYVIRDEER. Asn-73 carries an N-linked (GlcNAc...) asparagine glycan.

This sequence belongs to the RxLR effector family.

It is found in the secreted. The protein resides in the host cytoplasm. The protein localises to the host nucleus. Its function is as follows. Secreted effector that suppresses pattern-triggered immunity (PTI) in plant host. This is Secreted RxLR effector protein RXLR-C17 from Plasmopara halstedii (Downy mildew of sunflower).